Reading from the N-terminus, the 407-residue chain is Imidazolonepropionase (407 aa).

2 residues coordinate Fe(3+): H68 and H70. Zn(2+) contacts are provided by H68 and H70. 3 residues coordinate 4-imidazolone-5-propanoate: R77, Y140, and H173. Residue Y140 participates in N-formimidoyl-L-glutamate binding. Position 238 (H238) interacts with Fe(3+). H238 contacts Zn(2+). Q241 contributes to the 4-imidazolone-5-propanoate binding site. Residue D313 participates in Fe(3+) binding. D313 lines the Zn(2+) pocket. N315 and G317 together coordinate N-formimidoyl-L-glutamate. Residue T318 participates in 4-imidazolone-5-propanoate binding.

It belongs to the metallo-dependent hydrolases superfamily. HutI family. Zn(2+) is required as a cofactor. It depends on Fe(3+) as a cofactor.

It localises to the cytoplasm. The catalysed reaction is 4-imidazolone-5-propanoate + H2O = N-formimidoyl-L-glutamate. It functions in the pathway amino-acid degradation; L-histidine degradation into L-glutamate; N-formimidoyl-L-glutamate from L-histidine: step 3/3. Catalyzes the hydrolytic cleavage of the carbon-nitrogen bond in imidazolone-5-propanoate to yield N-formimidoyl-L-glutamate. It is the third step in the universal histidine degradation pathway. The chain is Imidazolonepropionase from Burkholderia pseudomallei (strain 1710b).